Consider the following 99-residue polypeptide: DNA-directed RNA polymerase subunit omega (99 aa).

Belongs to the RNA polymerase subunit omega family. As to quaternary structure, the RNAP catalytic core consists of 2 alpha, 1 beta, 1 beta' and 1 omega subunit. When a sigma factor is associated with the core the holoenzyme is formed, which can initiate transcription.

It catalyses the reaction RNA(n) + a ribonucleoside 5'-triphosphate = RNA(n+1) + diphosphate. Promotes RNA polymerase assembly. Latches the N- and C-terminal regions of the beta' subunit thereby facilitating its interaction with the beta and alpha subunits. This chain is DNA-directed RNA polymerase subunit omega, found in Deinococcus geothermalis (strain DSM 11300 / CIP 105573 / AG-3a).